The primary structure comprises 212 residues: Pyridoxine/pyridoxamine 5'-phosphate oxidase (212 aa).

Residues 8–11 (RREY) and Lys-66 contribute to the substrate site. Residues 61 to 66 (RIVLLK), 76 to 77 (FT), Arg-82, Lys-83, and Gln-105 contribute to the FMN site. Residues Tyr-123, Arg-127, and Ser-131 each contribute to the substrate site. FMN-binding positions include 140–141 (QS) and Trp-185. A substrate-binding site is contributed by 191–193 (RLH). Residue Arg-195 participates in FMN binding.

The protein belongs to the pyridoxamine 5'-phosphate oxidase family. In terms of assembly, homodimer. FMN is required as a cofactor.

It carries out the reaction pyridoxamine 5'-phosphate + O2 + H2O = pyridoxal 5'-phosphate + H2O2 + NH4(+). The enzyme catalyses pyridoxine 5'-phosphate + O2 = pyridoxal 5'-phosphate + H2O2. It functions in the pathway cofactor metabolism; pyridoxal 5'-phosphate salvage; pyridoxal 5'-phosphate from pyridoxamine 5'-phosphate: step 1/1. It participates in cofactor metabolism; pyridoxal 5'-phosphate salvage; pyridoxal 5'-phosphate from pyridoxine 5'-phosphate: step 1/1. Functionally, catalyzes the oxidation of either pyridoxine 5'-phosphate (PNP) or pyridoxamine 5'-phosphate (PMP) into pyridoxal 5'-phosphate (PLP). The chain is Pyridoxine/pyridoxamine 5'-phosphate oxidase from Shewanella halifaxensis (strain HAW-EB4).